Reading from the N-terminus, the 264-residue chain is tRNA (guanine-N(1)-)-methyltransferase (264 aa).

S-adenosyl-L-methionine contacts are provided by residues Gly120 and 140–145; that span reads IGDYVL.

It belongs to the RNA methyltransferase TrmD family. As to quaternary structure, homodimer.

Its subcellular location is the cytoplasm. It carries out the reaction guanosine(37) in tRNA + S-adenosyl-L-methionine = N(1)-methylguanosine(37) in tRNA + S-adenosyl-L-homocysteine + H(+). Its function is as follows. Specifically methylates guanosine-37 in various tRNAs. This Halorhodospira halophila (strain DSM 244 / SL1) (Ectothiorhodospira halophila (strain DSM 244 / SL1)) protein is tRNA (guanine-N(1)-)-methyltransferase.